A 297-amino-acid polypeptide reads, in one-letter code: MTTPRNSVNGTFPAEPMKGPIAMQSGPKPLFRRMSSLVGPTQSFFMRESKTLGAVQIMNGLFHIALGGLLMIPAGIYAPICVTVWYPLWGGIMYIISGSLLAATEKNSRKCLVKGKMIMNSLSLFAAISGMILSIMDILNIKISHFLKMESLNFIRAHTPYINIYNCEPANPSEKNSPSTQYCYSIQSLFLGILSVMLIFAFFQELVIAGIVENEWKRTCSRPKSNIVLLSAEEKKEQTIEIKEEVVGLTETSSQPKNEEDIEIIPIQEEEEEETETNFPEPPQDQESSPIENDSSP.

At 1-56 the chain is on the cytoplasmic side; the sequence is MTTPRNSVNGTFPAEPMKGPIAMQSGPKPLFRRMSSLVGPTQSFFMRESKTLGAVQ. Ser36 carries the phosphoserine modification. The helical transmembrane segment at 57–78 threads the bilayer; it reads IMNGLFHIALGGLLMIPAGIYA. Positions 74-80 are epitope 1; the sequence is AGIYAPI. The Extracellular segment spans residues 79 to 84; the sequence is PICVTV. A helical transmembrane segment spans residues 85-105; that stretch reads WYPLWGGIMYIISGSLLAATE. The Cytoplasmic portion of the chain corresponds to 106 to 120; sequence KNSRKCLVKGKMIMN. A lipid anchor (S-palmitoyl cysteine) is attached at Cys111. A helical transmembrane segment spans residues 121-141; that stretch reads SLSLFAAISGMILSIMDILNI. Residues 142 to 188 lie on the Extracellular side of the membrane; sequence KISHFLKMESLNFIRAHTPYINIYNCEPANPSEKNSPSTQYCYSIQS. Residues 146–160 are epitope 2; it reads FLKMESLNFIRAHTP. A disulfide bridge links Cys167 with Cys183. Positions 168-175 are epitope 3 (recognized by antibodies, including Rituximab); the sequence is EPANPSEK. The chain crosses the membrane as a helical span at residues 189–209; that stretch reads LFLGILSVMLIFAFFQELVIA. Residues 210-297 lie on the Cytoplasmic side of the membrane; that stretch reads GIVENEWKRT…SSPIENDSSP (88 aa). The S-palmitoyl cysteine moiety is linked to residue Cys220. Position 225 is a phosphoserine (Ser225). A Phosphothreonine modification is found at Thr239. The disordered stretch occupies residues 247 to 297; that stretch reads VGLTETSSQPKNEEDIEIIPIQEEEEEETETNFPEPPQDQESSPIENDSSP. Residues 260–276 show a composition bias toward acidic residues; that stretch reads EDIEIIPIQEEEEEETE. The segment covering 285–297 has biased composition (polar residues); that stretch reads DQESSPIENDSSP.

It belongs to the MS4A family. Forms homotetramers. Interacts with the heavy and light chains of cell surface IgM, the antigen-binding components of the BCR. Post-translationally, phosphorylated on serines and threonines in resting B-cells. Protein kinase C/PKC can use CD20 as substrate. In terms of tissue distribution, expressed on B-cells.

It is found in the cell membrane. In terms of biological role, B-lymphocyte-specific membrane protein that plays a role in the regulation of cellular calcium influx necessary for the development, differentiation, and activation of B-lymphocytes. Functions as a store-operated calcium (SOC) channel component promoting calcium influx after activation by the B-cell receptor/BCR. This chain is B-lymphocyte antigen CD20 (MS4A1), found in Homo sapiens (Human).